Reading from the N-terminus, the 1241-residue chain is MMENWPKKPEGSQWTDDQWKAVVATGRDILVAAAAGSGKTAVLVERIIKKIINEENPVDVDRLLVVTFTNAAAQEMKNRIGEALEKVLIDEPGSQHVRKQLSLLNKASISTIHSFCLQVIRGYYYMLDVDPRFRIANQTENELLKEEVLDDILEEEYGIEDNTIFFELVDRYTSDRSDDDLQRMILALHTESRAHPNPEKWLDKLVEAYDVEGKTIEDLVYASYLLEDVKFQLETAEQHIRKATELAMLPDGPAPRIETLQADLALLGTLSAAARESWTSVYEAMQNVSWQTLKRIKKSDYNEDIVKQVDSLRNKAKDEVKKLQEELFSRRPESFLRDFQDMHPVLEKLVQLVKVFTERFQAMKRDKGMVDFTDLEHFCLQILSEQSEDGEMKPSAVALQYRNKFAEVLVDEYQDTNFVQESIIKFVTKDSESEGNLFMVGDVKQSIYRFRLAEPGLFLGKYKRFTQEGLGGGMKIDLAKNFRSRHEVLAGTNFIFKQIMGEEVGEIDYDADAELKLGASYPEGEDVAAELLCIQQTEEEVIDGEEGAEVEKAQLEARLMAQRIKAMVDSGYEVYDRKTDSMRPVKYRDFVILLRSMPWAPQIMEELKLQGIPVYADLATGYFEATEVNIMMNVFRVIDNPMQDIPLAAVLRSPIVGLNDEELATLRAHGKKGSFYEVMSSFLKGAPLEEEKELHDKLEWFYNLLQGWREFARQQSLSDLIWKVYGETGYYDFVGGLPAGKQRQANLRVLYDRARQYEATSFRGLFRFLRFIERILERGDDMGTARALGEQEDVVRIMTIHKSKGLEFPVVFVAGLGRRFNTQDLMKRFLLHKDFGFGSQFIDPRKRIKYTTLSQLAIKRKMKMELIAEEMRVLYVALTRAKEKLILIGTVKDATKEMEKWLDAREHSEWLLPDHVRAGASCYLDWIAPSLYRHRDSEMLLELGQGSIPDEIYGYDTSWKVEVVDGNTLLAPEPVQEEKQELLEALREKKAVPLESERKEEVYDRLMWKYGYGEATSHRAKQSVTEIKRNYQSEEGSDNAFIKKLRAPIQTRPRFMEKKGLTYAERGTAVHAVMQHVDLKKPITVEILQEQIAGMVNKELLTFEQAEEIAIEKVISFFDSDLGKRVLAAKSVEREVPFTMMLAAEEAYQDWQGESGESILVQGVIDCMIEEEDGITLIDFKTDTIEGKFPGGFEQAKPILETRYKVQLSLYAKALEKSLQHPVKEKCLYFFDGNHVIKVEE.

The UvrD-like helicase ATP-binding domain occupies 12–485 (SQWTDDQWKA…IDLAKNFRSR (474 aa)). 33–40 (AAAGSGKT) contacts ATP. Residues 505-805 (GEIDYDADAE…RIMTIHKSKG (301 aa)) form the UvrD-like helicase C-terminal domain.

It belongs to the helicase family. AddA subfamily. As to quaternary structure, heterodimer of AddA and AddB/RexB. Requires Mg(2+) as cofactor.

It carries out the reaction Couples ATP hydrolysis with the unwinding of duplex DNA by translocating in the 3'-5' direction.. It catalyses the reaction ATP + H2O = ADP + phosphate + H(+). Functionally, the heterodimer acts as both an ATP-dependent DNA helicase and an ATP-dependent, dual-direction single-stranded exonuclease. Recognizes the chi site generating a DNA molecule suitable for the initiation of homologous recombination. The AddA nuclease domain is required for chi fragment generation; this subunit has the helicase and 3' -&gt; 5' nuclease activities. The sequence is that of ATP-dependent helicase/nuclease subunit A from Bacillus anthracis.